Consider the following 645-residue polypeptide: Pro-neuregulin-1, membrane-bound isoform (645 aa).

Positions 1–19 (MSERKEGRGKGKGKKKDRG) are excised as a propeptide. The disordered stretch occupies residues 1 to 52 (MSERKEGRGKGKGKKKDRGSRGKPAPAEGDPSPALPPRLKEMKSQESAAGSK). Over 20-247 (SRGKPAPAEG…MEAEELYQKR (228 aa)) the chain is Extracellular. In terms of domain architecture, Ig-like C2-type spans 37–128 (PRLKEMKSQE…GNDSASANIT (92 aa)). Cysteines 57 and 112 form a disulfide. Positions 139–164 (MSASTERPYVSSESPIRISVSTEGAN) are enriched in polar residues. The disordered stretch occupies residues 139 to 175 (MSASTERPYVSSESPIRISVSTEGANTSSSTSTSTTG). Residues 165 to 175 (TSSSTSTSTTG) show a composition bias toward low complexity. The EGF-like domain occupies 178–222 (HLIKCAEKEKTFCVNGGECFMVKDLSNPSRYLCKCPNEFTGDRCQ). Cystine bridges form between cysteine 182-cysteine 196, cysteine 190-cysteine 210, and cysteine 212-cysteine 221. Residues 248–268 (VLTITGICIALLVVGIMCVVA) form a helical membrane-spanning segment. The Cytoplasmic segment spans residues 269 to 645 (YCKTKKQRQK…VIANQDPIAV (377 aa)). Positions 340–355 (SHYTSTAHHSTTVTQT) are enriched in low complexity. 4 disordered regions span residues 340–364 (SHYT…SNGH), 380–406 (SVEN…PREC), 433–463 (MTTP…PVSS), and 531–593 (ETTQ…DTPF). A compositionally biased stretch (gly residues) spans 392–402 (GPRGRLHGLGG). The segment covering 547–557 (TNSRRAKRTKP) has biased composition (basic residues). A compositionally biased stretch (low complexity) spans 568–579 (DSNPSSVSSNSE).

It belongs to the neuregulin family. As to quaternary structure, the cytoplasmic domain interacts with the LIM domain region of LIMK1. Forms a ternary complex with ERBB3 and ITGAV:ITGB3 or ITGA6:ITGB4. Interacts with NRDC and BACE1. Proteolytic cleavage close to the plasma membrane on the external face leads to the release of the soluble growth factor form. In terms of processing, N- and O-glycosylated. Extensive glycosylation precedes the proteolytic cleavage.

It localises to the cell membrane. The protein resides in the secreted. Direct ligand for ERBB3 and ERBB4 tyrosine kinase receptors. Concomitantly recruits ERBB1 and ERBB2 coreceptors, resulting in ligand-stimulated tyrosine phosphorylation and activation of the ERBB receptors. Perform diverse functions such as inducing growth and differentiation of epithelial, glial, neuronal, and skeletal muscle cells; inducing expression of acetylcholine receptor in synaptic vesicles during the formation of the neuromuscular junction; stimulating lobuloalveolar budding and milk production in the mammary gland and inducing differentiation of mammary tumor cells; stimulating Schwann cell proliferation; implication in the development of the myocardium such as trabeculation of the developing heart. Binds to ERBB4 and ERBB3. Acts as a ligand for integrins and binds (via EGF domain) to integrins ITGAV:ITGB3 or ITGA6:ITGB4. Its binding to integrins and subsequent ternary complex formation with integrins and ERRB3 are essential for NRG1-ERBB signaling. Induces the phosphorylation and activation of MAPK3/ERK1, MAPK1/ERK2 and AKT1, and ligand-dependent ERBB4 endocytosis is essential for the NRG1-mediated activation of these kinases in neurons. This is Pro-neuregulin-1, membrane-bound isoform from Mus musculus (Mouse).